The chain runs to 122 residues: uncharacterized protein (122 aa).

Over residues Asn79 to Arg90 the composition is skewed to polar residues. The segment at Asn79–Lys122 is disordered. The span at Glu94–Lys122 shows a compositional bias: low complexity.

This is an uncharacterized protein from Leptolyngbya boryana (Plectonema boryanum).